The following is a 388-amino-acid chain: Galactokinase (388 aa).

A substrate-binding site is contributed by 33 to 36 (EHTD). Residues S67 and 124-130 (GAGLSSS) each bind ATP. Positions 130 and 162 each coordinate Mg(2+). D174 serves as the catalytic Proton acceptor. Y224 contacts substrate.

It belongs to the GHMP kinase family. GalK subfamily.

It is found in the cytoplasm. It catalyses the reaction alpha-D-galactose + ATP = alpha-D-galactose 1-phosphate + ADP + H(+). The protein operates within carbohydrate metabolism; galactose metabolism. Catalyzes the transfer of the gamma-phosphate of ATP to D-galactose to form alpha-D-galactose-1-phosphate (Gal-1-P). The chain is Galactokinase from Lacticaseibacillus casei (strain BL23) (Lactobacillus casei).